A 94-amino-acid polypeptide reads, in one-letter code: Acylphosphatase (94 aa).

In terms of domain architecture, Acylphosphatase-like spans 5 to 94 (RLTAFVHGHV…PRDVEGFVER (90 aa)). Catalysis depends on residues arginine 20 and asparagine 38.

This sequence belongs to the acylphosphatase family.

It catalyses the reaction an acyl phosphate + H2O = a carboxylate + phosphate + H(+). This chain is Acylphosphatase (acyP), found in Corynebacterium glutamicum (strain R).